The following is a 159-amino-acid chain: RNA pyrophosphohydrolase (159 aa).

One can recognise a Nudix hydrolase domain in the interval 6-149; it reads GFRPNVGIIL…KREVYRRALK (144 aa). Positions 38–59 match the Nudix box motif; that stretch reads GGINARETPEEALFRELNEEVG.

It belongs to the Nudix hydrolase family. RppH subfamily. A divalent metal cation is required as a cofactor.

Its function is as follows. Accelerates the degradation of transcripts by removing pyrophosphate from the 5'-end of triphosphorylated RNA, leading to a more labile monophosphorylated state that can stimulate subsequent ribonuclease cleavage. This Stutzerimonas stutzeri (strain A1501) (Pseudomonas stutzeri) protein is RNA pyrophosphohydrolase.